Here is a 483-residue protein sequence, read N- to C-terminus: MGLFDFSVKELHDKLVKKEISPFDLVSESFNRIESVEDKVGSFITLNKEAAFGVAEELGDAGIDPNNMLAGLPIGIKDNIVTKNLRTTAASKILENFDPIYDATVVSKLKNAQTINIGKLNMDEFAMGSSTETSYFHKTHNPWDLSRVPGGSSGGSASAVAAGEVLFSLGSDTGGSIRQPAAFCGVVGMKPTYGRVSRFGLIAFASSLDQIGPITKNVEDNAYLLEAISGLDANDSTSINQPVERFSDSLTGDIKGLRIGVPKEYLAEGVDPGVKQAVLDALKTLEKLGATWDEVSLPHSEYGVASYYILASSEASSNLSRFDGVRYGYRSPNATTLEELYTKTRSEGFGDEVKRRIMLGTYALSSGYYDAYYKKAQQARTLIKQDFINVFENYDVIIGPSSPTTAFKIDGMINDPITMYSNDILTVPINLAGVPAISVPCGFSDGLPVGLQIIGNYFEESLLYKVAHAFEQETTFHKEKPNL.

Active-site charge relay system residues include lysine 77 and serine 152. The active-site Acyl-ester intermediate is serine 176.

It belongs to the amidase family. GatA subfamily. In terms of assembly, heterotrimer of A, B and C subunits.

It carries out the reaction L-glutamyl-tRNA(Gln) + L-glutamine + ATP + H2O = L-glutaminyl-tRNA(Gln) + L-glutamate + ADP + phosphate + H(+). Allows the formation of correctly charged Gln-tRNA(Gln) through the transamidation of misacylated Glu-tRNA(Gln) in organisms which lack glutaminyl-tRNA synthetase. The reaction takes place in the presence of glutamine and ATP through an activated gamma-phospho-Glu-tRNA(Gln). In Listeria monocytogenes serovar 1/2a (strain ATCC BAA-679 / EGD-e), this protein is Glutamyl-tRNA(Gln) amidotransferase subunit A.